The sequence spans 1361 residues: MAYSYTEKKRIRKNFGKLPHVMDVPYLLAIQLDSYRKFTQADLSANKREDVGLHAAFRSVFPIVSYSGNAALEYVSYSLGKAAFDVNECILRGVTYAVPLRVKVRLIIYDRESANKAIKDIKEQEVYMGEIPLMTDNGTFVINGTERVIVSQLHRSPGVFFDHDKGKTHSSGKLLYSARIIPYRGSWLDFEFDPKDLLYVRIDRRRKLPATILLRALNYSSQEMLSMFFETSSFTLGKDGQFSYEVVPSRLRGDVATFDIKDDKGNIIVEEGRRITARHIRQLEKAGVDQMEVPSEYLLGRSLAKDIVDTRTGELLFECNTEITSDVLSKIVAAGVEKVETLYTNELDCGPFISETLRIDPTRTQLEALVEIYRMMRPGEPPTKESAEALFQNLFFSQERYDLSAVGRMKFNRRLGRETETGEGTLSNDDIVDVMKTLISIRNGKGVVDDIDHLGNRRVRSVGEMAENQFRVGLVRVERAVKERLSMAESEGLMPQDLINAKPVAAAVKEFFGSSQLSQFMDQNNPLSEITHKRRVFALGPGGLTRERAGFEVRDVHPTHYGRVCPIETPEGPNIGLINSLATYARTNNYGFLESPYRKVIEGKVTDQIEYLSAINESEYVIAQASASLDDNGRLTEELVSVRHQNEFTLKAPTDVQYMDVSARQVVSVAASLIPFLEHDDANRALMGSNMQRQAVPTLRSQKPLVGTGMERNVAADSGVCVVAKRGGVIDSVDAGRIVVKVHDAEVEAGDAGVDIYNLIKYTRSNQNTCINQRPIVSMGDIVSRGDILADGPSVDMGELALGQNMRIAFMPWNGYNFEDSILVSERVVQEDRFTTIHIQELTCIARDTKLGSEEITADIPNVGESALSKLDESGIVYIGAEVGGGDILVGKVTPKGETQLTPEEKLLRAIFGEKASDVKDTSLRVPSGTKGTVIDVQVFTRDGLEKDQRSLEIEKAQLDEVRKDLNEEFRIVETATFERLRAALVGQIVASGKGVKKGEALTHDILDGLEKDQWFKLRMNEDALNEQIDRAEEQLAERRKILDERFEDKKRKLSTGDDLAPGVLKIVKVYLAIKRRIQPGDKMAGRHGNKGVISVIMPVEDMPYDENGETVDIVLNPLGVPSRMNVGQVLEMHLGMAAKGLGVKINKLIQEQKAVADIRSFLEEIYNSTGDVAAKEDLVSFSDREVIDLAKNLVDGVPMATPVFDGAKEHEIKALLRLASLSDTGQTTLFDGRTGDQFSRSVTVGYMYMLKLNHLVDDKMHARSTGSYSLVTQQPLGGKAQFGGQRFGEMEVWALEAYGAAYTLQEMLTVKSDDVAGRTKMYKNIVDGDHRMEPGMPESFNVLVKEIRSLGINIELEQED.

This sequence belongs to the RNA polymerase beta chain family. In terms of assembly, the RNAP catalytic core consists of 2 alpha, 1 beta, 1 beta' and 1 omega subunit. When a sigma factor is associated with the core the holoenzyme is formed, which can initiate transcription.

The enzyme catalyses RNA(n) + a ribonucleoside 5'-triphosphate = RNA(n+1) + diphosphate. Its function is as follows. DNA-dependent RNA polymerase catalyzes the transcription of DNA into RNA using the four ribonucleoside triphosphates as substrates. This chain is DNA-directed RNA polymerase subunit beta, found in Cellvibrio japonicus (strain Ueda107) (Pseudomonas fluorescens subsp. cellulosa).